A 287-amino-acid chain; its full sequence is Protease HtpX (287 aa).

2 helical membrane passes run 4-24 (VMLF…VLNI) and 36-56 (LSGL…ISLM). Position 143 (His143) interacts with Zn(2+). Residue Glu144 is part of the active site. A Zn(2+)-binding site is contributed by His147. Transmembrane regions (helical) follow at residues 158-178 (LMQG…ANIV) and 192-212 (MVYF…ASFI). Zn(2+) is bound at residue Glu221.

The protein belongs to the peptidase M48B family. Requires Zn(2+) as cofactor.

It is found in the cell inner membrane. This is Protease HtpX from Vibrio atlanticus (strain LGP32) (Vibrio splendidus (strain Mel32)).